Here is a 303-residue protein sequence, read N- to C-terminus: 1-acyl-sn-glycerol-3-phosphate acyltransferase (303 aa).

The HXXXXD motif motif lies at 82–87 (HQSTLD). A disordered region spans residues 278–303 (NEPVPSVSISNDVNTHNEGSSVKKMH). Over residues 284–297 (VSISNDVNTHNEGS) the composition is skewed to polar residues.

Belongs to the 1-acyl-sn-glycerol-3-phosphate acyltransferase family.

Its subcellular location is the lipid droplet. It carries out the reaction a 1-acyl-sn-glycero-3-phosphate + an acyl-CoA = a 1,2-diacyl-sn-glycero-3-phosphate + CoA. The catalysed reaction is a 1-acyl-sn-glycero-3-phosphocholine + an acyl-CoA = a 1,2-diacyl-sn-glycero-3-phosphocholine + CoA. The enzyme catalyses a 1-acyl-sn-glycero-3-phosphoethanolamine + an acyl-CoA = a 1,2-diacyl-sn-glycero-3-phosphoethanolamine + CoA. It catalyses the reaction 1-hexadecanoyl-sn-glycero-3-phosphate + (9Z)-octadecenoyl-CoA = 1-hexadecanoyl-2-(9Z-octadecenoyl)-sn-glycero-3-phosphate + CoA. It carries out the reaction 1-octadecanoyl-sn-glycero-3-phosphate + (9Z)-octadecenoyl-CoA = 1-octadecanoyl-2-(9Z-octadecenoyl)-sn-glycero-3-phosphate + CoA. The catalysed reaction is 1-(9Z-octadecenoyl)-sn-glycero-3-phospho-L-serine + (9Z)-octadecenoyl-CoA = 1,2-di-(9Z)-octadecenoyl-sn-glycero-3-phospho-L-serine + CoA. The enzyme catalyses a 1-acyl-sn-glycero-3-phospho-(1D-myo-inositol) + (9Z)-octadecenoyl-CoA = a 1-acyl-2-(9Z-octadecenoyl)-sn-glycero-3-phospho-(1D-myo-inositol) + CoA. It catalyses the reaction 1-heptadecanoyl-sn-glycero-3-phosphate + (9Z)-octadecenoyl-CoA = 1-heptadecanoyl-2-(9Z)-octadecenoyl-sn-glycero-3-phosphate + CoA. It carries out the reaction 1-heptadecanoyl-sn-glycero-3-phosphate + dodecanoyl-CoA = 1-heptadecanoyl-2-dodecanoyl-sn-glycero-3-phosphate + CoA. The catalysed reaction is 1-heptadecanoyl-sn-glycero-3-phosphate + tetradecanoyl-CoA = 1-heptadecanoyl-2-tetradecanoyl-sn-glycero-3-phosphate + CoA. Its pathway is phospholipid metabolism; CDP-diacylglycerol biosynthesis; CDP-diacylglycerol from sn-glycerol 3-phosphate: step 2/3. Acyltransferase that catalyzes the sn-2-specific, acyl-CoA-dependent acylation of lysophosphatidic acid (LPA) to phosphatidic acid (PA) in lipid particles. Together with ALE1, plays a central role in PA biosynthesis. PA is the intermediate, from which all glycerophospholipids are synthesized. Can also acylate lysophosphoinositol (LPI) and lysophosphoserine (LPS). The fatty acyl substrates include 18:1-acyl-CoA, 14:0-acyl-CoA, 12:0-acyl-CoA and 10:0-acyl-CoA. This is 1-acyl-sn-glycerol-3-phosphate acyltransferase from Saccharomyces cerevisiae (strain ATCC 204508 / S288c) (Baker's yeast).